Reading from the N-terminus, the 275-residue chain is UBX domain-containing protein 8 (275 aa).

Residue Met-1 is a topological domain, cytoplasmic. A helical membrane pass occupies residues 2-22 (ASRGVVGIFLLSALPLLCLEL). Residues 23 to 33 (RRGKPDLGIKD) lie on the Lumenal side of the membrane. The helical transmembrane segment at 34-54 (LILLCGRIFLLLALLTLIISV) threads the bilayer. Residues 55–275 (TTSWVNSFKP…LNVEEKEQSS (221 aa)) lie on the Cytoplasmic side of the membrane. Residues 137–181 (DEDLELDSESQTSFETSNREAAKRRNLPNSVTNISPPAEQPTKKE) form a disordered region. In terms of domain architecture, UBX spans 192-268 (TAEEVVTVAL…GITVDTVLNV (77 aa)).

As to quaternary structure, interacts with SYVN1 and VCP.

Its subcellular location is the endoplasmic reticulum membrane. In terms of biological role, involved in endoplasmic reticulum-associated degradation (ERAD) for misfolded lumenal proteins, possibly by tethering VCP to the endoplasmic reticulum membrane. May play a role in reproduction. Its function is as follows. May play a role in reproduction. This is UBX domain-containing protein 8 (UBXN8) from Bos taurus (Bovine).